The primary structure comprises 84 residues: PAMP-induced secreted peptide 2 (84 aa).

The N-terminal stretch at 1 to 24 (MMMNKNVLSSILFFMLIGSVLVES) is a signal peptide. A disordered region spans residues 50–84 (KDSGPSPGEGHKVVDRKDTFRFVKHSGPSPSGPGH). Positions 58 to 70 (EGHKVVDRKDTFR) are enriched in basic and acidic residues. Proline 77 and proline 79 each carry 4-hydroxyproline.

Contains 4-hydroxyproline; hydroxylated on Pro-77 and Pro-79.

It is found in the secreted. Its subcellular location is the extracellular space. It localises to the apoplast. Its function is as follows. Endogenous secreted peptide that acts as elicitor of immune response and positive regulator of defense response. Amplifies the immune response triggered by flg22, the active epitope of bacterial flagellin. Acts as a negative regulator of root growth. This chain is PAMP-induced secreted peptide 2, found in Arabidopsis thaliana (Mouse-ear cress).